We begin with the raw amino-acid sequence, 211 residues long: Ribonuclease HII (211 aa).

The RNase H type-2 domain occupies 17-211 (FLSAGVDEVG…CQPSLFEVRS (195 aa)). The a divalent metal cation site is built by aspartate 23, glutamate 24, and aspartate 119.

Belongs to the RNase HII family. Mn(2+) is required as a cofactor. Mg(2+) serves as cofactor.

The protein localises to the cytoplasm. The enzyme catalyses Endonucleolytic cleavage to 5'-phosphomonoester.. Its function is as follows. Endonuclease that specifically degrades the RNA of RNA-DNA hybrids. This Trichodesmium erythraeum (strain IMS101) protein is Ribonuclease HII.